A 336-amino-acid polypeptide reads, in one-letter code: Phospho-N-acetylmuramoyl-pentapeptide-transferase (336 aa).

10 consecutive transmembrane segments (helical) span residues 3–23 (LTLI…PYFI), 53–73 (GGTV…LFSI), 78–98 (SLAL…IGFL), 118–138 (LALQ…PSGI), 143–163 (VFGY…FWVV), 174–194 (GIDG…GVIA), 200–220 (FDVL…FCFN), 226–246 (VFMG…ISIA), 251–271 (WTLL…MLQV), and 316–336 (AFLW…LYVF).

Belongs to the glycosyltransferase 4 family. MraY subfamily. Mg(2+) is required as a cofactor.

It localises to the cell membrane. The enzyme catalyses UDP-N-acetyl-alpha-D-muramoyl-L-alanyl-gamma-D-glutamyl-L-lysyl-D-alanyl-D-alanine + di-trans,octa-cis-undecaprenyl phosphate = Mur2Ac(oyl-L-Ala-gamma-D-Glu-L-Lys-D-Ala-D-Ala)-di-trans,octa-cis-undecaprenyl diphosphate + UMP. Its pathway is cell wall biogenesis; peptidoglycan biosynthesis. Its function is as follows. Catalyzes the initial step of the lipid cycle reactions in the biosynthesis of the cell wall peptidoglycan: transfers peptidoglycan precursor phospho-MurNAc-pentapeptide from UDP-MurNAc-pentapeptide onto the lipid carrier undecaprenyl phosphate, yielding undecaprenyl-pyrophosphoryl-MurNAc-pentapeptide, known as lipid I. This is Phospho-N-acetylmuramoyl-pentapeptide-transferase from Streptococcus pyogenes serotype M4 (strain MGAS10750).